The chain runs to 220 residues: Large ribosomal subunit protein uL16 (220 aa).

Belongs to the universal ribosomal protein uL16 family. Component of the small ribosomal subunit. Mature ribosomes consist of a small (40S) and a large (60S) subunit. The 40S subunit contains about 33 different proteins and 1 molecule of RNA (18S). The 60S subunit contains about 49 different proteins and 3 molecules of RNA (25S, 5.8S and 5S).

The protein is Large ribosomal subunit protein uL16 (RPL10) of Vitis riparia (Frost grape).